Reading from the N-terminus, the 411-residue chain is CinA-like protein (411 aa).

The protein belongs to the CinA family.

In Dictyoglomus thermophilum (strain ATCC 35947 / DSM 3960 / H-6-12), this protein is CinA-like protein.